The following is a 308-amino-acid chain: Isoaspartyl peptidase/L-asparaginase (308 aa).

M1 is subject to N-acetylmethionine. T168 (nucleophile) is an active-site residue. Residues 196 to 199 (RVGD) and 219 to 222 (TGHG) each bind substrate.

This sequence belongs to the Ntn-hydrolase family. Heterodimer of an alpha and beta chain produced by autocleavage. This heterodimer may then dimerize in turn, giving rise to a heterotetramer. In terms of processing, cleaved into an alpha and beta chain by autocatalysis; this activates the enzyme. The N-terminal residue of the beta subunit is responsible for the nucleophile hydrolase activity.

It is found in the cytoplasm. It carries out the reaction L-asparagine + H2O = L-aspartate + NH4(+). The enzyme catalyses Cleavage of a beta-linked Asp residue from the N-terminus of a polypeptide.. Its function is as follows. Has both L-asparaginase and beta-aspartyl peptidase activity. May be involved in the production of L-aspartate, which can act as an excitatory neurotransmitter in some brain regions. Is highly active with L-Asp beta-methyl ester. Besides, has catalytic activity toward beta-aspartyl dipeptides and their methyl esters, including beta-L-Asp-L-Phe, beta-L-Asp-L-Phe methyl ester (aspartame), beta-L-Asp-L-Ala, beta-L-Asp-L-Leu and beta-L-Asp-L-Lys. Does not have aspartylglucosaminidase activity and is inactive toward GlcNAc-L-Asn. Likewise, has no activity toward glutamine. The sequence is that of Isoaspartyl peptidase/L-asparaginase (ASRGL1) from Bos taurus (Bovine).